Reading from the N-terminus, the 143-residue chain is Anti-sigma F factor (143 aa).

It belongs to the anti-sigma-factor family.

The catalysed reaction is L-seryl-[protein] + ATP = O-phospho-L-seryl-[protein] + ADP + H(+). The enzyme catalyses L-threonyl-[protein] + ATP = O-phospho-L-threonyl-[protein] + ADP + H(+). Functionally, binds to sigma F and blocks its ability to form an RNA polymerase holoenzyme (E-sigma F). Phosphorylates SpoIIAA on a serine residue. This phosphorylation may enable SpoIIAA to act as an anti-anti-sigma factor that counteracts SpoIIAB and thus releases sigma F from inhibition. This chain is Anti-sigma F factor, found in Clostridium beijerinckii (strain ATCC 51743 / NCIMB 8052) (Clostridium acetobutylicum).